The sequence spans 1127 residues: Cellulose synthase-like protein D1 (1127 aa).

A disordered region spans residues 1-24 (MASKGILKNGGKPPTAPSSAAPTV). Helical transmembrane passes span 262 to 282 (VISP…LFLM) and 292 to 312 (AIWL…SWVL). Catalysis depends on residues D392 and D828. Transmembrane regions (helical) follow at residues 910-930 (VFLI…QFIV), 936-956 (TFLT…MLEI), 982-1002 (LAAV…SFTL), 1025-1045 (SLMI…AVGF), 1059-1079 (LLGG…FAKG), and 1089-1109 (TIVY…WIAI).

The protein belongs to the glycosyltransferase 2 family. Plant cellulose synthase-like D subfamily.

The protein resides in the golgi apparatus membrane. Thought to be a Golgi-localized beta-glycan synthase that polymerize the backbones of noncellulosic polysaccharides (hemicelluloses) of plant cell wall. This is Cellulose synthase-like protein D1 (CSLD1) from Oryza sativa subsp. indica (Rice).